Here is a 74-residue protein sequence, read N- to C-terminus: Protein SOM1, mitochondrial (74 aa).

Component of the mitochondrial inner membrane peptidase (IMP) complex which at least consists of IMP1, IMP2 and SOM1.

It localises to the mitochondrion inner membrane. Its function is as follows. Non-catalytic component of the mitochondrial inner membrane peptidase (IMP) complex. IMP catalyzes the removal of signal peptides required for the targeting of proteins from the mitochondrial matrix, across the inner membrane, into the inter-membrane space. SOM1 facilitates cleavage of a subset of IMP substrates. This chain is Protein SOM1, mitochondrial (SOM1), found in Saccharomyces cerevisiae (strain ATCC 204508 / S288c) (Baker's yeast).